The primary structure comprises 367 residues: Glutamate 5-kinase 2 (367 aa).

Residue Lys10 coordinates ATP. Ser50, Asp136, and Asn148 together coordinate substrate. ATP is bound by residues 168 to 169 (TD) and 210 to 216 (TGGMATK). Residues 275-353 (SGQIVIDAGA…KQIGELLDYD (79 aa)) form the PUA domain.

Belongs to the glutamate 5-kinase family.

The protein resides in the cytoplasm. It carries out the reaction L-glutamate + ATP = L-glutamyl 5-phosphate + ADP. Its pathway is amino-acid biosynthesis; L-proline biosynthesis; L-glutamate 5-semialdehyde from L-glutamate: step 1/2. Its function is as follows. Catalyzes the transfer of a phosphate group to glutamate to form L-glutamate 5-phosphate. This Pseudoalteromonas translucida (strain TAC 125) protein is Glutamate 5-kinase 2.